Consider the following 485-residue polypeptide: Lysophospholipid acyltransferase 5 (485 aa).

At Ala2 the chain carries N-acetylalanine. Helical transmembrane passes span 35 to 55 (ASEQ…FALF), 82 to 102 (YNFG…FLIL), 108 to 128 (TITA…AGYY), 139 to 158 (WTMP…MDYY), 176 to 196 (IWGV…GAFL), 232 to 252 (LALG…ITED), and 283 to 303 (VTCW…FNGL). Active-site residues include Asn336 and His372. Helical transmembrane passes span 362–382 (GLSL…LVCF), 420–440 (LAQQ…FCLF), and 448–468 (VYKS…FILP). Positions 482–485 (KKME) match the Di-lysine motif motif.

This sequence belongs to the membrane-bound acyltransferase family.

It is found in the endoplasmic reticulum membrane. The catalysed reaction is a 1-acyl-sn-glycero-3-phosphocholine + an acyl-CoA = a 1,2-diacyl-sn-glycero-3-phosphocholine + CoA. It catalyses the reaction a 1-acyl-sn-glycero-3-phosphoethanolamine + an acyl-CoA = a 1,2-diacyl-sn-glycero-3-phosphoethanolamine + CoA. The enzyme catalyses a 1-acyl-sn-glycero-3-phospho-L-serine + an acyl-CoA = a 1,2-diacyl-sn-glycero-3-phospho-L-serine + CoA. It carries out the reaction (9Z,12Z)-octadecadienoyl-CoA + a 1-acyl-sn-glycero-3-phosphocholine = 1-acyl-2-(9Z,12Z)-octadecadienoyl-sn-glycero-3-phosphocholine + CoA. The catalysed reaction is (5Z,8Z,11Z,14Z)-eicosatetraenoyl-CoA + a 1-acyl-sn-glycero-3-phosphocholine = 1-acyl-2-(5Z,8Z,11Z,14Z-eicosatetraenoyl)-sn-glycero-3-phosphocholine + CoA. It catalyses the reaction dodecanoyl-CoA + 1-hexadecanoyl-sn-glycero-3-phosphocholine = 1-hexadecanoyl-2-dodecanoyl-sn-glycero-3-phosphocholine + CoA. The enzyme catalyses octadecanoyl-CoA + 1-hexadecanoyl-sn-glycero-3-phosphocholine = 1-hexadecanoyl-2-octadecanoyl-sn-glycero-3-phosphocholine + CoA. It carries out the reaction 1-dodecanoyl-sn-glycero-3-phosphocholine + hexadecanoyl-CoA = 1-dodecanoyl-2-hexadecanoyl-sn-glycero-3-phosphocholine + CoA. The catalysed reaction is 1-tetradecanoyl-sn-glycero-3-phosphocholine + hexadecanoyl-CoA = 1-tetradecanoyl-2-hexadecanoyl-sn-glycero-3-phosphocholine + CoA. It catalyses the reaction 1-hexadecanoyl-sn-glycero-3-phosphocholine + hexadecanoyl-CoA = 1,2-dihexadecanoyl-sn-glycero-3-phosphocholine + CoA. The enzyme catalyses 1-octadecanoyl-sn-glycero-3-phosphocholine + hexadecanoyl-CoA = 1-octadecanoyl-2-hexadecanoyl-sn-glycero-3-phosphocholine + CoA. It carries out the reaction 1-(9Z-octadecenoyl)-sn-glycero-3-phosphocholine + hexadecanoyl-CoA = 1-(9Z-octadecenoyl)-2-hexadecanoyl-sn-glycero-3-phosphocholine + CoA. The catalysed reaction is (9Z)-hexadecenoyl-CoA + 1-hexadecanoyl-sn-glycero-3-phosphocholine = 1-hexadecanoyl-2-(9Z-hexadecenoyl)-sn-glycero-3-phosphocholine + CoA. It catalyses the reaction 1-hexadecanoyl-sn-glycero-3-phosphocholine + (9Z)-octadecenoyl-CoA = 1-hexadecanoyl-2-(9Z-octadecenoyl)-sn-glycero-3-phosphocholine + CoA. The enzyme catalyses (9Z,12Z)-octadecadienoyl-CoA + 1-hexadecanoyl-sn-glycero-3-phosphocholine = 1-hexadecanoyl-2-(9Z,12Z-octadecadienoyl)-sn-glycero-3-phosphocholine + CoA. It carries out the reaction 1-dodecanoyl-sn-glycero-3-phosphocholine + (5Z,8Z,11Z,14Z)-eicosatetraenoyl-CoA = 1-dodecanoyl-2-(5Z,8Z,11Z,14Z)-eicosatetraenoyl-sn-glycero-3-phosphocholine + CoA. The catalysed reaction is (5Z,8Z,11Z,14Z)-eicosatetraenoyl-CoA + 1-hexadecanoyl-sn-glycero-3-phosphocholine = 1-hexadecanoyl-2-(5Z,8Z,11Z,14Z-eicosatetraenoyl)-sn-glycero-3-phosphocholine + CoA. It catalyses the reaction 1-octadecanoyl-sn-glycero-3-phosphocholine + (5Z,8Z,11Z,14Z)-eicosatetraenoyl-CoA = 1-octadecanoyl-2-(5Z,8Z,11Z,14Z-eicosatetraenoyl)-sn-glycero-3-phosphocholine + CoA. The enzyme catalyses 1-eicosanoyl-sn-glycero-3-phosphocholine + (5Z,8Z,11Z,14Z)-eicosatetraenoyl-CoA = 1-eicosanoyl-2-(5Z,8Z,11Z,14Z)-eicosatetraenoyl-sn-glycero-3-phosphocholine + CoA. It carries out the reaction 1-(9Z-octadecenoyl)-sn-glycero-3-phosphocholine + (9Z)-octadecenoyl-CoA = 1,2-di-(9Z-octadecenoyl)-sn-glycero-3-phosphocholine + CoA. The catalysed reaction is 1-(9Z-octadecenoyl)-sn-glycero-3-phosphocholine + (9Z,12Z)-octadecadienoyl-CoA = 1-(9Z)-octadecenoyl-2-(9Z,12Z)-octadecadienoyl-sn-glycero-3-phosphocholine + CoA. It catalyses the reaction 1-(9Z-octadecenoyl)-sn-glycero-3-phosphocholine + (5Z,8Z,11Z,14Z)-eicosatetraenoyl-CoA = 1-(9Z)-octadecenoyl-2-(5Z,8Z,11Z,14Z)-icosatetraenoyl-sn-glycero-3-phosphocholine + CoA. The enzyme catalyses a 1-acyl-sn-glycero-3-phosphoethanolamine + (9Z,12Z)-octadecadienoyl-CoA = 1-acyl-2-(9Z,12Z)-octadecadienoyl-sn-glycero-3-phosphoethanolamine + CoA. It carries out the reaction 1-(9Z-octadecenoyl)-sn-glycero-3-phosphoethanolamine + (9Z,12Z)-octadecadienoyl-CoA = 1-(9Z)-octadecenoyl-2-(9Z,12Z)-octadecadienoyl-sn-glycero-3-phosphoethanolamine + CoA. The catalysed reaction is 1-(10Z-heptadecenoyl)-sn-glycero-3-phosphoethanolamine + (9Z,12Z)-octadecadienoyl-CoA = 1-(10Z-heptadecenoyl)-2-(9Z,12Z-octadecadienoyl)-sn-glycero-3-phosphoethanolamine + CoA. It catalyses the reaction a 1-acyl-sn-glycero-3-phosphoethanolamine + (5Z,8Z,11Z,14Z)-eicosatetraenoyl-CoA = 1-acyl-2-(5Z,8Z,11Z,14Z)-eicosatetraenoyl-sn-glycero-3-phosphoethanolamine + CoA. The enzyme catalyses 1-hexadecanoyl-sn-glycero-3-phosphoethanolamine + (5Z,8Z,11Z,14Z)-eicosatetraenoyl-CoA = 1-hexadecanoyl-2-(5Z,8Z,11Z,14Z-eicosatetraenoyl)-sn-glycero-3-phosphoethanolamine + CoA. It carries out the reaction 1-(9Z-octadecenoyl)-sn-glycero-3-phosphoethanolamine + (5Z,8Z,11Z,14Z)-eicosatetraenoyl-CoA = 1-(9Z)-octadecenoyl-2-(5Z,8Z,11Z,14Z)-eicosatetraenoyl-sn-glycero-3-phosphoethanolamine + CoA. The catalysed reaction is 1-(10Z-heptadecenoyl)-sn-glycero-3-phosphoethanolamine + (5Z,8Z,11Z,14Z)-eicosatetraenoyl-CoA = 1-(10Z-heptadecenoyl)-2-(5Z,8Z,11Z,14Z-eicosatetraenoyl)-sn-glycero-3-phosphoethanolamine + CoA. It catalyses the reaction a 1-O-(1Z-alkenyl)-sn-glycero-3-phosphoethanolamine + (5Z,8Z,11Z,14Z)-eicosatetraenoyl-CoA = 1-O-(1Z)-alkenyl-2-(5Z,8Z,11Z,14Z)-eicosatetraenoyl-sn-glycero-3-phosphoethanolamine + CoA. The enzyme catalyses a 1-acyl-sn-glycero-3-phospho-L-serine + (9Z,12Z)-octadecadienoyl-CoA = 1-acyl-2-(9Z,12Z-octadecadienoyl)-sn-glycero-3-phospho-L-serine + CoA. It carries out the reaction a 1-acyl-sn-glycero-3-phospho-L-serine + (5Z,8Z,11Z,14Z)-eicosatetraenoyl-CoA = 1-acyl-2-(5Z,8Z,11Z,14Z-eicosatetraenoyl)-sn-glycero-3-phospho-L-serine + CoA. The catalysed reaction is 1-hexadecanoyl-sn-glycero-3-phospho-L-serine + (9Z)-octadecenoyl-CoA = 1-hexadecanoyl-2-(9Z-octadecenoyl)-sn-glycero-3-phospho-L-serine + CoA. It catalyses the reaction 1-(9Z-octadecenoyl)-sn-glycero-3-phospho-L-serine + (9Z)-octadecenoyl-CoA = 1,2-di-(9Z)-octadecenoyl-sn-glycero-3-phospho-L-serine + CoA. The enzyme catalyses 1-hexadecanoyl-sn-glycero-3-phospho-L-serine + (9Z,12Z)-octadecadienoyl-CoA = 1-hexadecanoyl-2-(9Z,12Z-octadecadienoyl)-sn-glycero-3-phospho-L-serine + CoA. It carries out the reaction 1-(9Z-octadecenoyl)-sn-glycero-3-phospho-L-serine + (9Z,12Z)-octadecadienoyl-CoA = 1-(9Z-octadecenoyl)-2-(9Z,12Z-octadienoyl)-sn-glycero-3-phospho-L-serine + CoA. The catalysed reaction is 1-hexadecanoyl-sn-glycero-3-phospho-L-serine + (5Z,8Z,11Z,14Z)-eicosatetraenoyl-CoA = 1-hexadecanoyl-2-(5Z,8Z,11Z,14Z-eicosatetraenoyl)-sn-glycero-3-phospho-L-serine + CoA. It catalyses the reaction 1-(9Z-octadecenoyl)-sn-glycero-3-phospho-L-serine + (5Z,8Z,11Z,14Z)-eicosatetraenoyl-CoA = 1-(9Z-octadecenoyl)-2-(5Z,8Z,11Z,14Z-eicosatetraenoyl)-sn-glycero-3-phospho-L-serine + CoA. It functions in the pathway lipid metabolism; phospholipid metabolism. Functionally, lysophospholipid O-acyltransferase (LPLAT) that catalyzes the reacylation step of the phospholipid remodeling process also known as the Lands cycle. Catalyzes transfer of the fatty acyl chain from fatty acyl-CoA to 1-acyl lysophospholipid to form various classes of phospholipids. Converts 1-acyl lysophosphatidylcholine (LPC) into phosphatidylcholine (PC) (LPCAT activity), 1-acyl lysophosphatidylserine (LPS) into phosphatidylserine (PS) (LPSAT activity) and 1-acyl lysophosphatidylethanolamine (LPE) into phosphatidylethanolamine (PE) (LPEAT activity). Favors polyunsaturated fatty acyl-CoAs as acyl donors compared to saturated fatty acyl-CoAs. Has higher activity for LPC acyl acceptors compared to LPEs and LPSs. Can also transfer the fatty acyl chain from fatty acyl-CoA to 1-O-alkyl lysophospholipid or 1-O-alkenyl lysophospholipid with lower efficiency. Acts as a major LPC O-acyltransferase in liver and intestine. As a component of the liver X receptor/NR1H3 or NR1H2 signaling pathway, mainly catalyzes the incorporation of arachidonate into PCs of endoplasmic reticulum (ER) membranes, increasing membrane dynamics and enabling triacylglycerols transfer to nascent very low-density lipoprotein (VLDL) particles. Promotes processing of sterol regulatory protein SREBF1 in hepatocytes, likely by facilitating the translocation of SREBF1-SCAP complex from ER to the Golgi apparatus. Participates in mechanisms by which the liver X receptor/NR1H3 or NR1H2 signaling pathway counteracts lipid-induced ER stress response and inflammation. Down-regulates hepatic inflammation by limiting arachidonic acid availability for synthesis of inflammatory eicosanoids, such as prostaglandins. In enterocytes, acts as a component of a gut-brain feedback loop that coordinates dietary lipid absorption and food intake. Regulates the abundance of PCs containing linoleate and arachidonate in enterocyte membranes, enabling passive diffusion of fatty acids and cholesterol across the membrane for efficient chylomicron assembly. In the intestinal crypt, acts as a component of dietary-responsive phospholipid-cholesterol axis, regulating the biosynthesis of cholesterol and its mitogenic effects on intestinal stem cells. The protein is Lysophospholipid acyltransferase 5 (LPCAT3) of Bos taurus (Bovine).